Consider the following 130-residue polypeptide: Small ribosomal subunit protein uS8 (130 aa).

Belongs to the universal ribosomal protein uS8 family. Part of the 30S ribosomal subunit.

Its function is as follows. One of the primary rRNA binding proteins, it binds directly to 16S rRNA central domain where it helps coordinate assembly of the platform of the 30S subunit. The chain is Small ribosomal subunit protein uS8 from Cenarchaeum symbiosum (strain A).